Reading from the N-terminus, the 427-residue chain is Gamma-glutamyl phosphate reductase (427 aa).

The protein belongs to the gamma-glutamyl phosphate reductase family.

The protein localises to the cytoplasm. The enzyme catalyses L-glutamate 5-semialdehyde + phosphate + NADP(+) = L-glutamyl 5-phosphate + NADPH + H(+). The protein operates within amino-acid biosynthesis; L-proline biosynthesis; L-glutamate 5-semialdehyde from L-glutamate: step 2/2. Functionally, catalyzes the NADPH-dependent reduction of L-glutamate 5-phosphate into L-glutamate 5-semialdehyde and phosphate. The product spontaneously undergoes cyclization to form 1-pyrroline-5-carboxylate. The chain is Gamma-glutamyl phosphate reductase from Anaeromyxobacter dehalogenans (strain 2CP-1 / ATCC BAA-258).